The primary structure comprises 75 residues: Large ribosomal subunit protein uL29 (75 aa).

It belongs to the universal ribosomal protein uL29 family.

The chain is Large ribosomal subunit protein uL29 from Nostoc punctiforme (strain ATCC 29133 / PCC 73102).